The primary structure comprises 2300 residues: Protein hobbit (2300 aa).

A signal peptide spans 1 to 21; sequence MMLQLLLFCLALFIFVYWVLP. Residues 23 to 117 are transmembrane domain; that stretch reads GISWYLVKRF…LRRTQTLAGK (95 aa). Disordered regions lie at residues 269–290 and 2111–2148; these read TSTG…RSYD and VSDE…GKKG. Over residues 270 to 282 the composition is skewed to polar residues; sequence STGQPSRRSTQGL. Positions 1750–2300 are required for endoplasmic reticulum-cell membrane contact sites location and binding to phosphatidylinositols; the sequence is VVSETVGAFL…ASSGKRSGND (551 aa). The segment covering 2119 to 2140 has biased composition (low complexity); that stretch reads ASTSSASTTNLQAKSSTSSSTK.

The protein resides in the cell membrane. Its subcellular location is the endoplasmic reticulum membrane. The protein localises to the mitochondrion membrane. Tube-forming lipid transport protein which binds to phosphatidylinositols and affects phosphatidylinositol-4,5-bisphosphate (PtdIns-4,5-P2) distribution. This chain is Protein hobbit, found in Drosophila melanogaster (Fruit fly).